Here is a 931-residue protein sequence, read N- to C-terminus: Envelope glycoprotein B (931 aa).

The first 71 residues, 1–71, serve as a signal peptide directing secretion; that stretch reads MSPCGYYSKW…FSMFVTAVVS (71 aa). At 72 to 786 the chain is on the virion surface side; it reads VSPSSFYESL…HGFTTFLSNP (715 aa). 5 cysteine pairs are disulfide-bonded: Cys122–Cys584, Cys139–Cys540, Cys213–Cys277, Cys369–Cys417, and Cys608–Cys645. The N-linked (GlcNAc...) asparagine; by host glycan is linked to Asn147. Residues 179–185 are involved in fusion and/or binding to host membrane; sequence AWAGSSY. Asn257 carries N-linked (GlcNAc...) asparagine; by host glycosylation. The segment at 264 to 271 is involved in fusion and/or binding to host membrane; that stretch reads GTPGTYRT. 4 N-linked (GlcNAc...) asparagine; by host glycosylation sites follow: Asn435, Asn503, Asn620, and Asn686. Hydrophobic membrane proximal region stretches follow at residues 731–784 and 764–784; these read IDKV…TFLS and VVLG…TFLS. Residues 787-807 form a helical membrane-spanning segment; sequence FGALAVGLLVLAGLVAAFFAY. The Intravirion segment spans residues 808 to 931; the sequence is RYVLKLKTSP…RVRTENVTGV (124 aa). The Golgi targeting signature appears at 881–884; sequence YMTL. The Internalization motif motif lies at 920–923; it reads YSRV.

Belongs to the herpesviridae glycoprotein B family. Homotrimer; disulfide-linked. Binds to heparan sulfate proteoglycans. Interacts with gH/gL heterodimer. Post-translationally, a proteolytic cleavage by host furin generates two subunits that remain linked by disulfide bonds.

It is found in the virion membrane. Its subcellular location is the host cell membrane. It localises to the host endosome membrane. The protein localises to the host Golgi apparatus membrane. Its function is as follows. Envelope glycoprotein that forms spikes at the surface of virion envelope. Essential for the initial attachment to heparan sulfate moieties of the host cell surface proteoglycans. Involved in fusion of viral and cellular membranes leading to virus entry into the host cell. Following initial binding to its host receptors, membrane fusion is mediated by the fusion machinery composed at least of gB and the heterodimer gH/gL. May be involved in the fusion between the virion envelope and the outer nuclear membrane during virion egress. The sequence is that of Envelope glycoprotein B from Varicella-zoster virus (strain Oka vaccine) (HHV-3).